Here is a 133-residue protein sequence, read N- to C-terminus: Protein NrdI (133 aa).

Belongs to the NrdI family.

Functionally, probably involved in ribonucleotide reductase function. The protein is Protein NrdI of Escherichia coli O17:K52:H18 (strain UMN026 / ExPEC).